The following is a 130-amino-acid chain: Small ribosomal subunit protein uS9 (130 aa).

Positions 98-130 (LKRAGLLTRDPRMKERKKPGLKKARRSPQFSKR) are disordered. Residues 111–130 (KERKKPGLKKARRSPQFSKR) are compositionally biased toward basic residues.

This sequence belongs to the universal ribosomal protein uS9 family.

This is Small ribosomal subunit protein uS9 from Staphylococcus saprophyticus subsp. saprophyticus (strain ATCC 15305 / DSM 20229 / NCIMB 8711 / NCTC 7292 / S-41).